The following is a 34-amino-acid chain: uncharacterized protein (34 aa).

A helical membrane pass occupies residues leucine 10–isoleucine 30.

It is found in the membrane. This is an uncharacterized protein from Shigella flexneri.